A 227-amino-acid polypeptide reads, in one-letter code: Fibrillarin-like rRNA/tRNA 2'-O-methyltransferase (227 aa).

Residues 86–87 (TT), 105–106 (EF), 130–131 (DA), and 150–153 (DVAQ) contribute to the S-adenosyl-L-methionine site.

This sequence belongs to the methyltransferase superfamily. Fibrillarin family. Interacts with nop5. Component of box C/D small ribonucleoprotein (sRNP) particles that contain rpl7ae, FlpA and nop5, plus a guide RNA. These sRNP particles form homodimers, giving rise to an asymmetric holoenzyme.

Its function is as follows. Involved in pre-rRNA and tRNA processing. Utilizes the methyl donor S-adenosyl-L-methionine to catalyze the site-specific 2'-hydroxyl methylation of ribose moieties in rRNA and tRNA. Site specificity is provided by a guide RNA that base pairs with the substrate. Methylation occurs at a characteristic distance from the sequence involved in base pairing with the guide RNA. The chain is Fibrillarin-like rRNA/tRNA 2'-O-methyltransferase from Pyrococcus furiosus (strain ATCC 43587 / DSM 3638 / JCM 8422 / Vc1).